A 141-amino-acid polypeptide reads, in one-letter code: Lutropin subunit beta (141 aa).

Residues 1–22 form the signal peptide; that stretch reads MERYQELTVLLLLLLLEGGSWG. Disulfide bonds link Cys-30–Cys-78, Cys-44–Cys-93, Cys-47–Cys-131, Cys-55–Cys-109, Cys-59–Cys-111, and Cys-114–Cys-121. Asn-34 carries N-linked (GlcNAc...) asparagine glycosylation.

Belongs to the glycoprotein hormones subunit beta family. Heterodimer of a common alpha chain and a unique beta chain which confers biological specificity to thyrotropin, lutropin, follitropin and gonadotropin.

It localises to the secreted. Functionally, promotes spermatogenesis and ovulation by stimulating the testes and ovaries to synthesize steroids. The chain is Lutropin subunit beta (LHB) from Trichosurus vulpecula (Brush-tailed possum).